Consider the following 206-residue polypeptide: MRYIVALTGGIGSGKSTVANAFADLGINVIDADIIARQVVEPGAPALHAIADHFGANMIAADGTLQRRALRERIFANPEEKNWLNALLHPLIQQETQHQIQRATSPYVLWVVPLLVENSLYKKANRVLVVDVSPETQLKRTMQRDDVTREHVEQILAAQATREARLAVADDVIDNNGAPDAIASDVARLHAYYLQLASQFVSQEKP.

Positions isoleucine 4–phenylalanine 200 constitute a DPCK domain. ATP is bound at residue glycine 12–threonine 17.

This sequence belongs to the CoaE family.

The protein localises to the cytoplasm. It catalyses the reaction 3'-dephospho-CoA + ATP = ADP + CoA + H(+). It participates in cofactor biosynthesis; coenzyme A biosynthesis; CoA from (R)-pantothenate: step 5/5. Functionally, catalyzes the phosphorylation of the 3'-hydroxyl group of dephosphocoenzyme A to form coenzyme A. This is Dephospho-CoA kinase from Escherichia coli O6:H1 (strain CFT073 / ATCC 700928 / UPEC).